The primary structure comprises 395 residues: Acetyl-CoA acetyltransferase (395 aa).

Catalysis depends on cysteine 90, which acts as the Acyl-thioester intermediate. Tyrosine 185 and lysine 230 together coordinate CoA. K(+) is bound at residue tyrosine 185. Residues alanine 246, alanine 247, and alanine 249 each contribute to the K(+) site. Serine 250 provides a ligand contact to CoA. Valine 347 is a binding site for K(+). Catalysis depends on proton acceptor residues histidine 351 and cysteine 381.

The protein belongs to the thiolase-like superfamily. Thiolase family. In terms of assembly, homotetramer.

It localises to the cytoplasm. The enzyme catalyses 2 acetyl-CoA = acetoacetyl-CoA + CoA. The protein operates within metabolic intermediate biosynthesis; (R)-mevalonate biosynthesis; (R)-mevalonate from acetyl-CoA: step 1/3. Its function is as follows. Acetyl-CoA acetyltransferase; part of the first module of ergosterol biosynthesis pathway that includes the early steps of the pathway, conserved across all eukaryotes, and which results in the formation of mevalonate from acetyl-coenzyme A (acetyl-CoA). Erg10 catalyzes the formation of acetoacetyl-CoA from acetyl-CoA. The first module starts with the action of the cytosolic acetyl-CoA acetyltransferase eg10 that catalyzes the formation of acetoacetyl-CoA. The hydroxymethylglutaryl-CoA synthases erg13 then condenses acetyl-CoA with acetoacetyl-CoA to form HMG-CoA. The rate-limiting step of the early module is the reduction to mevalonate by the 3-hydroxy-3-methylglutaryl-coenzyme A (HMG-CoA) reductases hcs1. This is Acetyl-CoA acetyltransferase (erg10) from Schizosaccharomyces pombe (strain 972 / ATCC 24843) (Fission yeast).